The primary structure comprises 227 residues: Cytochrome c oxidase subunit 2 (227 aa).

Over M1–S14 the chain is Mitochondrial intermembrane. The helical transmembrane segment at P15–M45 threads the bilayer. At L46–Q59 the chain is on the mitochondrial matrix side. The chain crosses the membrane as a helical span at residues E60 to M87. The Mitochondrial intermembrane portion of the chain corresponds to D88–V227. Cu cation is bound by residues H161, C196, E198, C200, H204, and M207. A Mg(2+)-binding site is contributed by E198. Y218 is subject to Phosphotyrosine.

Belongs to the cytochrome c oxidase subunit 2 family. In terms of assembly, component of the cytochrome c oxidase (complex IV, CIV), a multisubunit enzyme composed of 14 subunits. The complex is composed of a catalytic core of 3 subunits MT-CO1, MT-CO2 and MT-CO3, encoded in the mitochondrial DNA, and 11 supernumerary subunits COX4I, COX5A, COX5B, COX6A, COX6B, COX6C, COX7A, COX7B, COX7C, COX8 and NDUFA4, which are encoded in the nuclear genome. The complex exists as a monomer or a dimer and forms supercomplexes (SCs) in the inner mitochondrial membrane with NADH-ubiquinone oxidoreductase (complex I, CI) and ubiquinol-cytochrome c oxidoreductase (cytochrome b-c1 complex, complex III, CIII), resulting in different assemblies (supercomplex SCI(1)III(2)IV(1) and megacomplex MCI(2)III(2)IV(2)). Found in a complex with TMEM177, COA6, COX18, COX20, SCO1 and SCO2. Interacts with TMEM177 in a COX20-dependent manner. Interacts with COX20. Interacts with COX16. The cofactor is Cu cation.

It is found in the mitochondrion inner membrane. The catalysed reaction is 4 Fe(II)-[cytochrome c] + O2 + 8 H(+)(in) = 4 Fe(III)-[cytochrome c] + 2 H2O + 4 H(+)(out). Its function is as follows. Component of the cytochrome c oxidase, the last enzyme in the mitochondrial electron transport chain which drives oxidative phosphorylation. The respiratory chain contains 3 multisubunit complexes succinate dehydrogenase (complex II, CII), ubiquinol-cytochrome c oxidoreductase (cytochrome b-c1 complex, complex III, CIII) and cytochrome c oxidase (complex IV, CIV), that cooperate to transfer electrons derived from NADH and succinate to molecular oxygen, creating an electrochemical gradient over the inner membrane that drives transmembrane transport and the ATP synthase. Cytochrome c oxidase is the component of the respiratory chain that catalyzes the reduction of oxygen to water. Electrons originating from reduced cytochrome c in the intermembrane space (IMS) are transferred via the dinuclear copper A center (CU(A)) of subunit 2 and heme A of subunit 1 to the active site in subunit 1, a binuclear center (BNC) formed by heme A3 and copper B (CU(B)). The BNC reduces molecular oxygen to 2 water molecules using 4 electrons from cytochrome c in the IMS and 4 protons from the mitochondrial matrix. The polypeptide is Cytochrome c oxidase subunit 2 (MT-CO2) (Canis mesomelas elongae (Eastern African black-backed jackal)).